The following is a 204-amino-acid chain: Leucyl/phenylalanyl-tRNA--protein transferase (204 aa).

It belongs to the L/F-transferase family.

It is found in the cytoplasm. It catalyses the reaction N-terminal L-lysyl-[protein] + L-leucyl-tRNA(Leu) = N-terminal L-leucyl-L-lysyl-[protein] + tRNA(Leu) + H(+). The catalysed reaction is N-terminal L-arginyl-[protein] + L-leucyl-tRNA(Leu) = N-terminal L-leucyl-L-arginyl-[protein] + tRNA(Leu) + H(+). It carries out the reaction L-phenylalanyl-tRNA(Phe) + an N-terminal L-alpha-aminoacyl-[protein] = an N-terminal L-phenylalanyl-L-alpha-aminoacyl-[protein] + tRNA(Phe). Functions in the N-end rule pathway of protein degradation where it conjugates Leu, Phe and, less efficiently, Met from aminoacyl-tRNAs to the N-termini of proteins containing an N-terminal arginine or lysine. In Brucella anthropi (strain ATCC 49188 / DSM 6882 / CCUG 24695 / JCM 21032 / LMG 3331 / NBRC 15819 / NCTC 12168 / Alc 37) (Ochrobactrum anthropi), this protein is Leucyl/phenylalanyl-tRNA--protein transferase.